A 288-amino-acid chain; its full sequence is Nucleotide-binding protein Veis_1053 (288 aa).

Residue 10–17 (GMSGSGKS) coordinates ATP. Position 59–62 (59–62 (DVRS)) interacts with GTP.

The protein belongs to the RapZ-like family.

In terms of biological role, displays ATPase and GTPase activities. This chain is Nucleotide-binding protein Veis_1053, found in Verminephrobacter eiseniae (strain EF01-2).